The primary structure comprises 1651 residues: MKWKHLPLLVMISLLTLSKKHLLLAQLIPDPEDLERGNDNGTPAPTSDNDDNSLGYTGSRLRQEDFPPRIVEHPSDLIVSKGEPATLNCKAEGRPTPTIEWYKGGERVETDKDDPRSHRMLLPSGSLFFLRIVHGRKSRPDEGVYICVARNYLGEAVSHNASLEVAILRDDFRQNPSDVMVAVGEPAVMECQPPRGHPEPTISWKKDGSPLDDKDERITIRGGKLMITYTRKSDAGKYVCVGTNMVGERESKVADVTVLERPSFVKRPSNLAVTVDDSAEFKCEARGDPVPTFGWRKDDGELPKSRYEIRDDHTLKIRKVTAGDMGSYTCVAENMVGKAEASATLTVQEPPHFVVKPRDQVVALGRTVTFQCEATGNPQPAIFWRREGSQNLLFSYQPPQSSSRFSVSQTGDLTVTNVQRSDVGYYICQTLNVAGSIITKAYLEVTDVIADRPPPVIRQGPVNQTVAVDGTLTLSCVATGSPVPTILWRKDGVLVSTQDSRIKQLESGVLQIRYAKLGDTGRYTCTASTPSGEATWSAYIEVQEFGVPVQPPRPTDPNLIPSAPSKPEVTDVSKNTVTLLWQPNLNSGATPTSYIIEAFSHASGSSWQTVAENVKTETFAIKGLKPNAIYLFLVRAANAYGISDPSQISDPVKTQDVPPTTQGVDHKQVQRELGNVVLHLHNPTILSSSSVEVHWTVDQQSQYIQGYKILYRPSGASHGESEWLVFEVRTPTKNSVVIPDLRKGVNYEIKARPFFNEFQGADSEIKFAKTLEERPSAPPRSVTVSKNDGNGTAILVTWQPPPEDTQNGMVQEYKVWCLGNETRYHINKTVDGSTFSVVIPFLVPGIRYSVEVAASTGAGPGVKSEPQFIQLDSHGNPVSPEDQVSLAQQISDVVKQPAFIAGIGAACWIILMVFSIWLYRHRKKRNGLSSTYAGIRKVPSFTFTPTVTYQRGGEAVSSGGRPGLLNISEPATQPWLADTWPNTGNSHNDCSINCCTASNGNSDSNLTTYSRPADCIANYNNQLDNKQTNLMLPESTVYGDVDLSNKINEMKTFNSPNLKDGRFVNPSGQPTPYATTQLIQANLINNMNNGGGDSSEKHWKPPGQQKQEVAPIQYNIMEQNKLNKDYRANDTILPTIPYNHSYDQNTGGSYNSSDRGSSTSGSQGHKKGARTPKAPKQGGMNWADLLPPPPAHPPPHSNSEEYSMSVDESYDQEMPCPVPPARMYLQQDELEEEEAERGPTPPVRGAASSPAAVSYSHQSTATLTPSPQEELQPMLQDCPEDLGHMPHPPDRRRQPVSPPPPPRPISPPHTYGYISGPLVSDMDTDAPEEEEDEADMEVAKMQTRRLLLRGLEQTPASSVGDLESSVTGSMINGWGSASEEDNISSGRSSVSSSDGSFFTDADFAQAVAAAAEYAGLKVARRQMQDAAGRRHFHASQCPRPTSPVSTDSNMSAAVIQKARPTKKQKHQPGHLRREAYTDDLPPPPVPPPAIKSPSVQSKAQLEARPIMGPKLASIEARADRSSDRKGGSYKGREALDGRQVTDLRTSPGDPREAQEQPNEGKARGTKTAKRDLPPAKTHLIPEDILPYCRPTFPTSNNPRDPSSSSSMSSRGSGSRQREQANVGRRNMAEMQVLGGFERGDENNEELEETES.

Positions methionine 1 to alanine 25 are cleaved as a signal peptide. The Extracellular portion of the chain corresponds to glutamine 26–proline 897. A disordered region spans residues proline 31 to phenylalanine 66. Residues aspartate 39–tyrosine 56 are compositionally biased toward polar residues. Ig-like C2-type domains lie at proline 68–glutamate 164, aspartate 170–threonine 257, proline 262–threonine 346, proline 351–threonine 446, and proline 455–glutamate 541. Cysteine 89 and cysteine 147 are oxidised to a cystine. Asparagine 160 carries N-linked (GlcNAc...) asparagine glycosylation. 3 disulfide bridges follow: cysteine 191/cysteine 240, cysteine 283/cysteine 330, and cysteine 372/cysteine 428. A glycan (N-linked (GlcNAc...) asparagine) is linked at asparagine 463. Residues cysteine 476 and cysteine 525 are joined by a disulfide bond. Fibronectin type-III domains lie at alanine 563–valine 657, valine 676–glutamate 773, and proline 778–histidine 874. 3 N-linked (GlcNAc...) asparagine glycosylation sites follow: asparagine 790, asparagine 820, and asparagine 827. A helical membrane pass occupies residues alanine 898–leucine 918. Topologically, residues tyrosine 919–serine 1651 are cytoplasmic. Serine 940 is subject to Phosphoserine. Phosphothreonine is present on threonine 948. A Phosphotyrosine modification is found at tyrosine 1038. The residue at position 1055 (serine 1055) is a Phosphoserine. Tyrosine 1073 is modified (phosphotyrosine). The interval asparagine 1086–glutamine 1107 is disordered. Tyrosine 1114 is subject to Phosphotyrosine. Disordered stretches follow at residues proline 1137–glutamate 1337, glutamate 1352–phenylalanine 1397, and arginine 1420–serine 1651. The span at glycine 1147–glutamine 1163 shows a compositional bias: low complexity. Over residues leucine 1186–histidine 1196 the composition is skewed to pro residues. A Phosphothreonine modification is found at threonine 1240. Residues tyrosine 1255–glutamate 1269 show a composition bias toward polar residues. A compositionally biased stretch (basic and acidic residues) spans aspartate 1281–arginine 1293. The segment covering valine 1296–proline 1307 has biased composition (pro residues). Position 1297 is a phosphoserine (serine 1297). The segment covering methionine 1322–methionine 1336 has biased composition (acidic residues). The span at serine 1384 to phenylalanine 1397 shows a compositional bias: low complexity. The span at proline 1438 to serine 1451 shows a compositional bias: polar residues. A compositionally biased stretch (basic residues) spans arginine 1459 to histidine 1470. The span at leucine 1480–isoleucine 1490 shows a compositional bias: pro residues. Composition is skewed to basic and acidic residues over residues alanine 1516–threonine 1541 and aspartate 1549–proline 1573. The segment covering phenylalanine 1592 to proline 1601 has biased composition (polar residues). A compositionally biased stretch (low complexity) spans serine 1602–serine 1614. The segment covering asparagine 1642–serine 1651 has biased composition (acidic residues).

Belongs to the immunoglobulin superfamily. ROBO family. Homodimer. Dimerization is mediated by the extracellular domain and is independent of SLIT liganding. Interacts with SLIT1. Interacts with SLIT2. Interacts with FLRT3. Interacts with MYO9B (via Rho-GAP domain). Post-translationally, ubiquitinated. May be deubiquitinated by USP33. In terms of tissue distribution, expressed in embryonal brain and spinal cord.

The protein localises to the cell membrane. It localises to the cell projection. Its subcellular location is the axon. It is found in the endoplasmic reticulum-Golgi intermediate compartment membrane. Functionally, receptor for SLIT1 and SLIT2 that mediates cellular responses to molecular guidance cues in cellular migration, including axonal navigation at the ventral midline of the neural tube and projection of axons to different regions during neuronal development. Interaction with the intracellular domain of FLRT3 mediates axon attraction towards cells expressing NTN1. In axon growth cones, the silencing of the attractive effect of NTN1 by SLIT2 may require the formation of a ROBO1-DCC complex. Plays a role in the regulation of cell migration via its interaction with MYO9B; inhibits MYO9B-mediated stimulation of RHOA GTPase activity, and thereby leads to increased levels of active, GTP-bound RHOA. May be required for lung development. The chain is Roundabout homolog 1 (Robo1) from Rattus norvegicus (Rat).